Here is a 235-residue protein sequence, read N- to C-terminus: 2-C-methyl-D-erythritol 4-phosphate cytidylyltransferase (235 aa).

Belongs to the IspD/TarI cytidylyltransferase family. IspD subfamily.

It catalyses the reaction 2-C-methyl-D-erythritol 4-phosphate + CTP + H(+) = 4-CDP-2-C-methyl-D-erythritol + diphosphate. It functions in the pathway isoprenoid biosynthesis; isopentenyl diphosphate biosynthesis via DXP pathway; isopentenyl diphosphate from 1-deoxy-D-xylulose 5-phosphate: step 2/6. Its function is as follows. Catalyzes the formation of 4-diphosphocytidyl-2-C-methyl-D-erythritol from CTP and 2-C-methyl-D-erythritol 4-phosphate (MEP). This Pseudomonas putida (strain ATCC 700007 / DSM 6899 / JCM 31910 / BCRC 17059 / LMG 24140 / F1) protein is 2-C-methyl-D-erythritol 4-phosphate cytidylyltransferase.